Reading from the N-terminus, the 151-residue chain is 1,4-dihydroxy-2-naphthoyl-CoA hydrolase (151 aa).

D19 is a catalytic residue.

Belongs to the 4-hydroxybenzoyl-CoA thioesterase family. DHNA-CoA hydrolase subfamily.

It carries out the reaction 1,4-dihydroxy-2-naphthoyl-CoA + H2O = 1,4-dihydroxy-2-naphthoate + CoA + H(+). It functions in the pathway cofactor biosynthesis; phylloquinone biosynthesis. Its pathway is quinol/quinone metabolism; 1,4-dihydroxy-2-naphthoate biosynthesis; 1,4-dihydroxy-2-naphthoate from chorismate: step 7/7. Catalyzes the hydrolysis of 1,4-dihydroxy-2-naphthoyl-CoA (DHNA-CoA) to 1,4-dihydroxy-2-naphthoate (DHNA), a reaction involved in phylloquinone (vitamin K1) biosynthesis. The sequence is that of 1,4-dihydroxy-2-naphthoyl-CoA hydrolase from Prochlorococcus marinus (strain MIT 9313).